Consider the following 1760-residue polypeptide: Cilia- and flagella-associated protein 44 (1760 aa).

WD repeat units lie at residues 119–160, 163–202, 213–251, 276–315, and 388–427; these read GATK…MVLR, CHNTDVYTVLFSPFDSGLLVSGGAGHIKFWTMANTFTGLK, LEISNVSGFVVLSDGKVISGSESGLIILWEGDLIRCCFA, CHEGAINVVELMEGGRVLMTAGDDGYFRFWRVSELEVAEG, and FNGGSITSAALSPIDHTVVTGGEDGTIRLVDYVTPRELYK. A compositionally biased stretch (basic and acidic residues) spans 1155-1165; sequence RQEEKLREQTA. Residues 1155–1224 form a disordered region; it reads RQEEKLREQT…FGTAAARTRS (70 aa). The segment covering 1181–1190 has biased composition (polar residues); that stretch reads PATNTDTSGA. The span at 1194–1205 shows a compositional bias: basic and acidic residues; that stretch reads ATRRSEGEDSRK. A coiled-coil region spans residues 1348–1389; that stretch reads YDEARNSRDRCLREMEELQRLVQDQTASIEKLQEANKVFRRE. Positions 1420–1444 are disordered; it reads HSDMSGNDDDITSDDDDDDDMGEDE. Residues 1425–1444 show a composition bias toward acidic residues; sequence GNDDDITSDDDDDDDMGEDE.

Belongs to the CFAP44 family.

It is found in the cell projection. The protein localises to the cilium. It localises to the flagellum. The protein resides in the cytoplasm. Its subcellular location is the cytoskeleton. It is found in the flagellum axoneme. In terms of biological role, flagellar protein involved in flagellum axoneme organization and function. The chain is Cilia- and flagella-associated protein 44 from Trypanosoma brucei brucei (strain 927/4 GUTat10.1).